Reading from the N-terminus, the 512-residue chain is Rab11 family-interacting protein 2 (512 aa).

The 120-residue stretch at 1–120 folds into the C2 domain; that stretch reads MMLSEQAQKW…DKQRRKTEWF (120 aa). Positions 15–102 are necessary for its cellular translocation to the plasma membrane; the sequence is VQVTVLQAKD…GLDKFLGQVA (88 aa). Disordered stretches follow at residues 169–239 and 262–285; these read DKMK…MSSE and VPES…KMNQ. Residues 178 to 188 are compositionally biased toward polar residues; the sequence is GTFSDTSSAII. The segment covering 226-236 has biased composition (low complexity); that stretch reads HSMSDLSGSHM. Ser-227 is subject to Phosphoserine; by MARK2. Residue Ser-277 is modified to Phosphoserine. The short motif at 323-325 is the NPF 1 element; the sequence is NPF. The span at 361 to 374 shows a compositional bias: basic and acidic residues; that stretch reads ERVTGKKDSRRSDK. Residues 361-392 form a disordered region; it reads ERVTGKKDSRRSDKLNNGGSDSPCDLKSPNAF. Short sequence motifs (NPF) lie at residues 406–408 and 440–442; these read NPF. In terms of domain architecture, FIP-RBD spans 437 to 499; it reads PDSNPFDATA…EETPSILRVP (63 aa). Residues 465–512 are necessary for interaction with AP2A1, RAB11A, subcellular location, endocytosis activity and homooligomerization; the sequence is ELLRRKDTHIRELEDYIDNLLVRVMEETPSILRVPYEPSRKAGKFSNS.

As to quaternary structure, homooligomerizes in a Rab11-independent manner. Forms a heterooligomeric complex with RAB11FIP4. Interacts with AP2A1, MYO5B, RAB25 and REPS1. Interacts with RAB11A and RAB11B (activated GTP-bound form). Interacts with NPC1L1. Interacts (via NPF motifs) with EHD1 and EHD3. Interacts with TICAM2; this interaction directs RAB11FIP2 to the phagosome. Interacts with RAB14 and RAB25 (GTP-bound forms). Phosphorylation at Ser-227 by MARK2 regulates epithelial cell polarity.

The protein localises to the cell projection. It is found in the phagocytic cup. The protein resides in the cell membrane. Its subcellular location is the recycling endosome membrane. A Rab11 effector binding preferentially phosphatidylinositol 3,4,5-trisphosphate (PtdInsP3) and phosphatidic acid (PA) and acting in the regulation of the transport of vesicles from the endosomal recycling compartment (ERC) to the plasma membrane. Involved in insulin granule exocytosis. Also involved in receptor-mediated endocytosis and membrane trafficking of recycling endosomes, probably originating from clathrin-coated vesicles. Required in a complex with MYO5B and RAB11 for the transport of NPC1L1 to the plasma membrane. Also acts as a regulator of cell polarity. Plays an essential role in phagocytosis through a mechanism involving TICAM2, RAC1 and CDC42 Rho GTPases for controlling actin-dynamics. The polypeptide is Rab11 family-interacting protein 2 (RAB11FIP2) (Homo sapiens (Human)).